A 477-amino-acid chain; its full sequence is Proline--tRNA ligase (477 aa).

The protein belongs to the class-II aminoacyl-tRNA synthetase family. ProS type 3 subfamily. As to quaternary structure, homodimer.

Its subcellular location is the cytoplasm. The catalysed reaction is tRNA(Pro) + L-proline + ATP = L-prolyl-tRNA(Pro) + AMP + diphosphate. Catalyzes the attachment of proline to tRNA(Pro) in a two-step reaction: proline is first activated by ATP to form Pro-AMP and then transferred to the acceptor end of tRNA(Pro). This is Proline--tRNA ligase from Methanoculleus marisnigri (strain ATCC 35101 / DSM 1498 / JR1).